A 227-amino-acid polypeptide reads, in one-letter code: MIIKEYISGISTIGVLSLSTEKFGLAPYFAEENTINKFKKVLDVPVKALNIGNSSLIGALCCANSYGIILPPFTLNREKTILSDFLKENDIDIIVKEINAKNTAFGNLILLNDKGCIISEELADFRKTFEDIFDVEVVAKNIAELPTVGSNGVATNKGALVHPDTTDEELELIKDVLKLKCIERGTASKGTPSVGACIVANSNGAVIGGDTTGPEMLKIEEGLDLID.

The protein belongs to the eIF-6 family.

Binds to the 50S ribosomal subunit and prevents its association with the 30S ribosomal subunit to form the 70S initiation complex. This Methanococcus aeolicus (strain ATCC BAA-1280 / DSM 17508 / OCM 812 / Nankai-3) protein is Translation initiation factor 6.